Reading from the N-terminus, the 372-residue chain is Spermidine/putrescine import ATP-binding protein PotA (372 aa).

The 231-residue stretch at 11–241 (IELRSIKKSY…PANLFVARFI (231 aa)) folds into the ABC transporter domain. Residue 43–50 (GPSGCGKT) participates in ATP binding.

It belongs to the ABC transporter superfamily. Spermidine/putrescine importer (TC 3.A.1.11.1) family. The complex is composed of two ATP-binding proteins (PotA), two transmembrane proteins (PotB and PotC) and a solute-binding protein (PotD).

Its subcellular location is the cell inner membrane. It catalyses the reaction ATP + H2O + polyamine-[polyamine-binding protein]Side 1 = ADP + phosphate + polyamineSide 2 + [polyamine-binding protein]Side 1.. Functionally, part of the ABC transporter complex PotABCD involved in spermidine/putrescine import. Responsible for energy coupling to the transport system. In Haemophilus influenzae (strain ATCC 51907 / DSM 11121 / KW20 / Rd), this protein is Spermidine/putrescine import ATP-binding protein PotA.